The primary structure comprises 94 residues: Prepro-gonadotropin-releasing hormone-like protein (94 aa).

An N-terminal signal peptide occupies residues Met1–Gly21.

It is found in the secreted. Neuropeptide involved in reproduction. May be an important hormone in the regulation of gonadal maturation. This Ruditapes philippinarum (Japanese carpet shell) protein is Prepro-gonadotropin-releasing hormone-like protein.